A 338-amino-acid chain; its full sequence is Ketol-acid reductoisomerase (NADP(+)) (338 aa).

One can recognise a KARI N-terminal Rossmann domain in the interval 1-181 (MKIYYDKDCN…GGGRAGIIET (181 aa)). Residues 24 to 27 (YGSQ), Arg47, Ser50, Ser52, and 82 to 85 (DETQ) contribute to the NADP(+) site. The active site involves His107. Gly133 contributes to the NADP(+) binding site. A KARI C-terminal knotted domain is found at 182-327 (SFKEETETDL…ARLRSMMSWI (146 aa)). Mg(2+) is bound by residues Asp190, Glu194, Glu226, and Glu230. Substrate is bound at residue Ser251.

This sequence belongs to the ketol-acid reductoisomerase family. It depends on Mg(2+) as a cofactor.

It catalyses the reaction (2R)-2,3-dihydroxy-3-methylbutanoate + NADP(+) = (2S)-2-acetolactate + NADPH + H(+). The enzyme catalyses (2R,3R)-2,3-dihydroxy-3-methylpentanoate + NADP(+) = (S)-2-ethyl-2-hydroxy-3-oxobutanoate + NADPH + H(+). The protein operates within amino-acid biosynthesis; L-isoleucine biosynthesis; L-isoleucine from 2-oxobutanoate: step 2/4. Its pathway is amino-acid biosynthesis; L-valine biosynthesis; L-valine from pyruvate: step 2/4. Involved in the biosynthesis of branched-chain amino acids (BCAA). Catalyzes an alkyl-migration followed by a ketol-acid reduction of (S)-2-acetolactate (S2AL) to yield (R)-2,3-dihydroxy-isovalerate. In the isomerase reaction, S2AL is rearranged via a Mg-dependent methyl migration to produce 3-hydroxy-3-methyl-2-ketobutyrate (HMKB). In the reductase reaction, this 2-ketoacid undergoes a metal-dependent reduction by NADPH to yield (R)-2,3-dihydroxy-isovalerate. This Geobacter metallireducens (strain ATCC 53774 / DSM 7210 / GS-15) protein is Ketol-acid reductoisomerase (NADP(+)).